Consider the following 479-residue polypeptide: Sulfate adenylyltransferase subunit 1 (479 aa).

In terms of domain architecture, tr-type G spans 25-239 (KSLLRFLTCG…EVLETVDIQR (215 aa)). The G1 stretch occupies residues 34–41 (GSVDDGKS). Residue 34 to 41 (GSVDDGKS) participates in GTP binding. The G2 stretch occupies residues 92–96 (GITID). Residues 113-116 (DTPG) form a G3 region. Residues 113–117 (DTPGH) and 168–171 (NKMD) each bind GTP. Residues 168–171 (NKMD) are G4. Residues 206-208 (SAL) form a G5 region.

This sequence belongs to the TRAFAC class translation factor GTPase superfamily. Classic translation factor GTPase family. CysN/NodQ subfamily. In terms of assembly, heterodimer composed of CysD, the smaller subunit, and CysN.

The catalysed reaction is sulfate + ATP + H(+) = adenosine 5'-phosphosulfate + diphosphate. Its pathway is sulfur metabolism; hydrogen sulfide biosynthesis; sulfite from sulfate: step 1/3. Functionally, with CysD forms the ATP sulfurylase (ATPS) that catalyzes the adenylation of sulfate producing adenosine 5'-phosphosulfate (APS) and diphosphate, the first enzymatic step in sulfur assimilation pathway. APS synthesis involves the formation of a high-energy phosphoric-sulfuric acid anhydride bond driven by GTP hydrolysis by CysN coupled to ATP hydrolysis by CysD. This is Sulfate adenylyltransferase subunit 1 from Salmonella gallinarum (strain 287/91 / NCTC 13346).